Consider the following 199-residue polypeptide: Guanylate kinase (199 aa).

Residues 19 to 198 form the Guanylate kinase-like domain; the sequence is VTVAVVSGPT…AVAHLVELLS (180 aa). An ATP-binding site is contributed by 26–33; sequence GPTAVGKG.

The protein belongs to the guanylate kinase family.

Its subcellular location is the cytoplasm. It carries out the reaction GMP + ATP = GDP + ADP. Functionally, essential for recycling GMP and indirectly, cGMP. This Cutibacterium acnes (strain DSM 16379 / KPA171202) (Propionibacterium acnes) protein is Guanylate kinase.